Here is a 317-residue protein sequence, read N- to C-terminus: Metaxin-1 (317 aa).

Glycyl lysine isopeptide (Lys-Gly) (interchain with G-Cter in ubiquitin) cross-links involve residues lysine 38, lysine 41, and lysine 78. Residues 164 to 184 (EELEKELYQEARECLTLLSQR) form a helical membrane-spanning segment.

Belongs to the metaxin family. Interacts with MTX2/metaxin-2. Associates with the mitochondrial contact site and cristae organizing system (MICOS) complex, composed of at least MICOS10/MIC10, CHCHD3/MIC19, CHCHD6/MIC25, APOOL/MIC27, IMMT/MIC60, APOO/MIC23/MIC26 and QIL1/MIC13. This complex was also known under the names MINOS or MitOS complex. The MICOS complex associates with mitochondrial outer membrane proteins SAMM50, MTX1 and MTX2 (together described as components of the mitochondrial outer membrane sorting assembly machinery (SAM) complex) and DNAJC11, mitochondrial inner membrane protein TMEM11 and with HSPA9. The MICOS and SAM complexes together with DNAJC11 are part of a large protein complex spanning both membranes termed the mitochondrial intermembrane space bridging (MIB) complex. Interacts with ARMC1. Post-translationally, ubiquitinated by PRKN during mitophagy, leading to its degradation and enhancement of mitophagy. Deubiquitinated by USP30.

Its subcellular location is the mitochondrion outer membrane. Functionally, involved in transport of proteins into the mitochondrion. Essential for embryonic development. This is Metaxin-1 (MTX1) from Sus scrofa (Pig).